The chain runs to 597 residues: MFFSFYHSSFSSLSSFFFSFFSLLLYMLVLLQIFPKNYYEAGTLSIRVIRKNTFNHSYNNIKNIHYIHCGYPNIFNNCRNYYMNNFYNNNLSAPFKNKNNYMHIFFKIVEGNKKKKREHPFFKYLFHMNMLEKSGDKKNTVISKITESCQYGDIRKYMNMKKESLEEGEKNKSGEEYNKHVEQNNIKDEKIHFKDGTFIKSKEEEIENEKGGTICLKKEIQKNVLEINNNTYNNDTKYLSNPKGVTNKSKQSKKEIEKKKKKKNNNNNNNNNNKIKSEKSANDTKNIPPIPKNTEDRWNDYNKIKEYAKISNVYLGAHISASGGVQNAPINSFNISGLAFALFLKNQRKWESAALTNENIKQFEENCKKYNFDKNFILPHGSYLINLANPDKEKRDKSYLSFLDDIKRCEQLNIKLYNFHPGSTVGQCTVDEGIKNVADCINKVHKETNNVIIVLENSAGQKNSVGSKFEHLRDIINLVHDKDRIGVCLDTCHTFAAGYNIKTFENFDNVMKQFDDIVNVKYLKAVHLNDSKSDIGSGLDRHENIGKGKLTMDTFKYIMKSKYFKNIPIILETPDITNDESIYKYEIQNLYKLYFEK.

Polar residues predominate over residues 232–246 (YNNDTKYLSNPKGVT). Residues 232 to 296 (YNNDTKYLSN…IPPIPKNTED (65 aa)) form a disordered region. Residues 265–274 (NNNNNNNNNK) show a composition bias toward low complexity. Zn(2+) contacts are provided by His-380, His-420, Glu-456, Asp-490, His-493, His-527, Asp-540, His-542, and Glu-572. A Mn(2+)-binding site is contributed by His-493. Residues Asp-540 and His-542 each contribute to the Mn(2+) site.

This sequence belongs to the AP endonuclease 2 family. The cofactor is Zn(2+). Requires Mn(2+) as cofactor. May be proteolytically cleaved into a 59 kDa form.

The protein localises to the mitochondrion. Its activity is regulated as follows. Apurinic/apyrimidinic (AP) endonuclease activity is enhanced with increasing concentrations of Mn(2+), while Zn(2+) initially enhances activity but subsequently inhibits activity in a concentration-dependent manner. Co(2+) inhibits apurinic/apyrimidinic (AP) endonuclease activity at concentrations greater than 2.5 mM. In terms of biological role, plays a role in mitochondrial DNA base excision repair (BER) pathway induced by oxidative stress. Has apurinic/apyrimidinic (AP) endonuclease activity towards double-stranded DNA (dsDNA) with a preference for C as opposite base. Has 3'-phosphatase activity; removes 3'-phosphate from blunt-end, recessed, and gapped DNA templates and thus, removes 3'-blocks for DNA polymerase activity during BER. Lacks 3'-5' exonuclease activity and does not cleave damaged bases by nucleotide incision repair (NIR). The chain is Apurinic-apyrimidinic endonuclease 1 from Plasmodium falciparum (isolate 3D7).